The primary structure comprises 363 residues: Oxygen-dependent coproporphyrinogen-III oxidase (363 aa).

Ser-119 is a binding site for substrate. A divalent metal cation-binding residues include His-123 and His-133. The Proton donor role is filled by His-133. 135–137 provides a ligand contact to substrate; that stretch reads NYR. 2 residues coordinate a divalent metal cation: His-167 and His-197. The interval 287-322 is important for dimerization; it reads YVEFNLVWDRGTIFGLQTNGRTESILMSLPPLVRWE.

It belongs to the aerobic coproporphyrinogen-III oxidase family. As to quaternary structure, homodimer. A divalent metal cation is required as a cofactor.

It is found in the cytoplasm. The catalysed reaction is coproporphyrinogen III + O2 + 2 H(+) = protoporphyrinogen IX + 2 CO2 + 2 H2O. It functions in the pathway porphyrin-containing compound metabolism; protoporphyrin-IX biosynthesis; protoporphyrinogen-IX from coproporphyrinogen-III (O2 route): step 1/1. In terms of biological role, involved in the heme and chlorophyll biosynthesis. Catalyzes the aerobic oxidative decarboxylation of propionate groups of rings A and B of coproporphyrinogen-III to yield the vinyl groups in protoporphyrinogen-IX. This is Oxygen-dependent coproporphyrinogen-III oxidase from Parasynechococcus marenigrum (strain WH8102).